The chain runs to 335 residues: DNA-directed RNA polymerase subunit alpha (335 aa).

An alpha N-terminal domain (alpha-NTD) region spans residues 1 to 233 (MVREKIRVST…DLLIPFLHAE (233 aa)). Residues 263-335 (KKKIALKFIF…HFVIDLKNKR (73 aa)) form an alpha C-terminal domain (alpha-CTD) region.

Belongs to the RNA polymerase alpha chain family. In terms of assembly, in plastids the minimal PEP RNA polymerase catalytic core is composed of four subunits: alpha, beta, beta', and beta''. When a (nuclear-encoded) sigma factor is associated with the core the holoenzyme is formed, which can initiate transcription.

Its subcellular location is the plastid. The protein resides in the chloroplast. It carries out the reaction RNA(n) + a ribonucleoside 5'-triphosphate = RNA(n+1) + diphosphate. Its function is as follows. DNA-dependent RNA polymerase catalyzes the transcription of DNA into RNA using the four ribonucleoside triphosphates as substrates. This is DNA-directed RNA polymerase subunit alpha from Spinacia oleracea (Spinach).